A 335-amino-acid polypeptide reads, in one-letter code: Glycerol-3-phosphate dehydrogenase [NAD(P)+] (335 aa).

Tryptophan 11, arginine 30, and lysine 106 together coordinate NADPH. 3 residues coordinate sn-glycerol 3-phosphate: lysine 106, glycine 135, and serine 137. Alanine 139 lines the NADPH pocket. Sn-glycerol 3-phosphate contacts are provided by lysine 190, aspartate 243, serine 253, arginine 254, and asparagine 255. Residue lysine 190 is the Proton acceptor of the active site. An NADPH-binding site is contributed by arginine 254. Residues valine 278 and glutamate 280 each coordinate NADPH.

This sequence belongs to the NAD-dependent glycerol-3-phosphate dehydrogenase family.

It localises to the cytoplasm. It catalyses the reaction sn-glycerol 3-phosphate + NAD(+) = dihydroxyacetone phosphate + NADH + H(+). It carries out the reaction sn-glycerol 3-phosphate + NADP(+) = dihydroxyacetone phosphate + NADPH + H(+). Its pathway is membrane lipid metabolism; glycerophospholipid metabolism. Its function is as follows. Catalyzes the reduction of the glycolytic intermediate dihydroxyacetone phosphate (DHAP) to sn-glycerol 3-phosphate (G3P), the key precursor for phospholipid synthesis. This chain is Glycerol-3-phosphate dehydrogenase [NAD(P)+], found in Paucimonas lemoignei (Pseudomonas lemoignei).